Consider the following 268-residue polypeptide: Ribosomal RNA small subunit methyltransferase A (268 aa).

Asparagine 12, leucine 14, glycine 38, glutamate 59, aspartate 82, and asparagine 107 together coordinate S-adenosyl-L-methionine.

Belongs to the class I-like SAM-binding methyltransferase superfamily. rRNA adenine N(6)-methyltransferase family. RsmA subfamily.

It is found in the cytoplasm. It catalyses the reaction adenosine(1518)/adenosine(1519) in 16S rRNA + 4 S-adenosyl-L-methionine = N(6)-dimethyladenosine(1518)/N(6)-dimethyladenosine(1519) in 16S rRNA + 4 S-adenosyl-L-homocysteine + 4 H(+). Its function is as follows. Specifically dimethylates two adjacent adenosines (A1518 and A1519) in the loop of a conserved hairpin near the 3'-end of 16S rRNA in the 30S particle. May play a critical role in biogenesis of 30S subunits. The protein is Ribosomal RNA small subunit methyltransferase A of Aster yellows witches'-broom phytoplasma (strain AYWB).